A 253-amino-acid chain; its full sequence is UDP-Glc:alpha-D-GlcNAc-diphosphoundecaprenol beta-1,3-glucosyltransferase WfgD (253 aa).

This sequence belongs to the glycosyltransferase 2 family. Requires Mn(2+) as cofactor. It depends on Mg(2+) as a cofactor.

The protein localises to the cell inner membrane. It carries out the reaction N-acetyl-alpha-D-glucosaminyl-di-trans,octa-cis-undecaprenyl diphosphate + UDP-alpha-D-glucose = beta-D-Glc-(1-&gt;3)-alpha-D-GlcNAc-di-trans,octa-cis-undecaprenyl diphosphate + UDP + H(+). It participates in bacterial outer membrane biogenesis; lipopolysaccharide biosynthesis. Catalyzes the addition of Glc, the second sugar moiety of the O152-antigen repeating unit, to GlcNAc-pyrophosphate-undecaprenol. The chain is UDP-Glc:alpha-D-GlcNAc-diphosphoundecaprenol beta-1,3-glucosyltransferase WfgD (wfgD) from Escherichia coli.